Reading from the N-terminus, the 506-residue chain is Lysine--tRNA ligase (506 aa).

Positions 416 and 423 each coordinate Mg(2+).

This sequence belongs to the class-II aminoacyl-tRNA synthetase family. As to quaternary structure, homodimer. Mg(2+) is required as a cofactor.

It is found in the cytoplasm. The catalysed reaction is tRNA(Lys) + L-lysine + ATP = L-lysyl-tRNA(Lys) + AMP + diphosphate. This chain is Lysine--tRNA ligase, found in Xylella fastidiosa (strain M23).